Here is a 270-residue protein sequence, read N- to C-terminus: Phosphatidylglycerol--prolipoprotein diacylglyceryl transferase (270 aa).

4 helical membrane passes run 19–39, 54–74, 92–112, and 116–136; these read FPVY…LWLA, IDLV…YYVI, QGGL…ILFA, and GLSF…GQAI. An a 1,2-diacyl-sn-glycero-3-phospho-(1'-sn-glycerol)-binding site is contributed by Arg-138. 3 helical membrane passes run 178 to 198, 206 to 226, and 236 to 256; these read HPTF…LLAL, GELF…VEGL, and LRIA…FIIV.

Belongs to the Lgt family.

Its subcellular location is the cell membrane. The catalysed reaction is L-cysteinyl-[prolipoprotein] + a 1,2-diacyl-sn-glycero-3-phospho-(1'-sn-glycerol) = an S-1,2-diacyl-sn-glyceryl-L-cysteinyl-[prolipoprotein] + sn-glycerol 1-phosphate + H(+). Its pathway is protein modification; lipoprotein biosynthesis (diacylglyceryl transfer). Catalyzes the transfer of the diacylglyceryl group from phosphatidylglycerol to the sulfhydryl group of the N-terminal cysteine of a prolipoprotein, the first step in the formation of mature lipoproteins. The chain is Phosphatidylglycerol--prolipoprotein diacylglyceryl transferase from Bacillus mycoides (strain KBAB4) (Bacillus weihenstephanensis).